The sequence spans 125 residues: Large ribosomal subunit protein bL12 (125 aa).

Belongs to the bacterial ribosomal protein bL12 family. As to quaternary structure, homodimer. Part of the ribosomal stalk of the 50S ribosomal subunit. Forms a multimeric L10(L12)X complex, where L10 forms an elongated spine to which 2 to 4 L12 dimers bind in a sequential fashion. Binds GTP-bound translation factors.

Its function is as follows. Forms part of the ribosomal stalk which helps the ribosome interact with GTP-bound translation factors. Is thus essential for accurate translation. The polypeptide is Large ribosomal subunit protein bL12 (Helicobacter pylori (strain ATCC 700392 / 26695) (Campylobacter pylori)).